Reading from the N-terminus, the 314-residue chain is ATP synthase gamma chain (314 aa).

Belongs to the ATPase gamma chain family. In terms of assembly, F-type ATPases have 2 components, CF(1) - the catalytic core - and CF(0) - the membrane proton channel. CF(1) has five subunits: alpha(3), beta(3), gamma(1), delta(1), epsilon(1). CF(0) has three main subunits: a, b and c.

The protein localises to the cellular thylakoid membrane. Produces ATP from ADP in the presence of a proton gradient across the membrane. The gamma chain is believed to be important in regulating ATPase activity and the flow of protons through the CF(0) complex. This is ATP synthase gamma chain from Synechocystis sp. (strain ATCC 27184 / PCC 6803 / Kazusa).